A 310-amino-acid polypeptide reads, in one-letter code: tRNA uridine(34) hydroxylase (310 aa).

The Rhodanese domain occupies 134-232 (DDPDTLLIDT…YFEEVSQTES (99 aa)). Catalysis depends on Cys-192, which acts as the Cysteine persulfide intermediate.

The protein belongs to the TrhO family.

It carries out the reaction uridine(34) in tRNA + AH2 + O2 = 5-hydroxyuridine(34) in tRNA + A + H2O. In terms of biological role, catalyzes oxygen-dependent 5-hydroxyuridine (ho5U) modification at position 34 in tRNAs. This Prochlorococcus marinus (strain MIT 9313) protein is tRNA uridine(34) hydroxylase.